The following is a 504-amino-acid chain: Maturase K (504 aa).

It belongs to the intron maturase 2 family. MatK subfamily.

The protein resides in the plastid. It localises to the chloroplast. Functionally, usually encoded in the trnK tRNA gene intron. Probably assists in splicing its own and other chloroplast group II introns. The protein is Maturase K of Cardamine amara (Large bitter-cress).